The primary structure comprises 416 residues: MAFQKITVQNPIVEMDGDEMTRVIWKSIKDKLILPFLELDIKYFSLGLPHRDATDDKVTVESAEATQKYNVAIKCATITPDEARVKEFNLKSMWRSPNGTIRNILNGTVFREPIMCKNIPRLVPGWTKPICIGRHAFGDQYRATDTVIKGAGKLKLVFVPEGSDEKTEFEVYNFTGAGGVALSMYNTDESVRSFAEASMNMAFQKKWPLYLSTKNTILKKYDGRFKDIFQEVYEANWKSKYEEAGIWYEHRLIDDMVAYALKSEGGYVWACKNYDGDVQSDFLAQGFGSLGLMTSVLVCPDGKTIEAEAAHGTVTRHYRVHQKGGETSTNSIASIFAWTRGLAHRATLDNNERLLDFTEKLEAACIGAVESGKMTKDLALIIIHGSKLSREHYLNTEEFIDAVADELKARLLKAKA.

NADP(+) is bound by residues 77–79 and arginine 84; that span reads TIT. Threonine 79 contacts substrate. Substrate-binding positions include 96 to 102, arginine 111, and arginine 134; that span reads SPNGTIR. Aspartate 254 provides a ligand contact to Mn(2+). Lysine 262 serves as a coordination point for NADP(+). Position 277 (aspartate 277) interacts with Mn(2+). NADP(+) is bound by residues 312 to 317 and asparagine 330; that span reads GTVTRH.

This sequence belongs to the isocitrate and isopropylmalate dehydrogenases family. As to quaternary structure, heterodimer. The cofactor is Mg(2+). It depends on Mn(2+) as a cofactor.

It localises to the cytoplasm. It carries out the reaction D-threo-isocitrate + NADP(+) = 2-oxoglutarate + CO2 + NADPH. Functionally, may supply 2-oxoglutarate for amino acid biosynthesis and ammonia assimilation via the glutamine synthetase/glutamate synthase (GS/GOGAT) pathway. The sequence is that of Isocitrate dehydrogenase [NADP] (ICDH-1) from Solanum tuberosum (Potato).